Here is a 257-residue protein sequence, read N- to C-terminus: UPF0246 protein lpl1317 (257 aa).

This sequence belongs to the UPF0246 family.

This Legionella pneumophila (strain Lens) protein is UPF0246 protein lpl1317.